The primary structure comprises 285 residues: Heterogeneous nuclear ribonucleoprotein A/B (285 aa).

Positions 1–65 (MSDAAEEQPM…NQNGAEGDQI (65 aa)) are disordered. Positions 25–43 (EGEAPVEPSAAAAAPAASA) are enriched in low complexity. RRM domains are found at residues 75-158 (GKMF…KDPV) and 159-238 (KKIF…QPKE). Residue Ser-87 is modified to Phosphoserine. Glycyl lysine isopeptide (Lys-Gly) (interchain with G-Cter in SUMO2) cross-links involve residues Lys-136 and Lys-208. Residue Lys-220 is modified to N6-acetyllysine. Residues 239 to 285 (VYQQQQYGSGGRGNRNRGNRGSGGGQGSTNYGKSQRRGGHQNNYKPY) are disordered. Ser-247 carries the post-translational modification Phosphoserine. Arg-250 carries the post-translational modification Dimethylated arginine; alternate. Residue Arg-250 is modified to Omega-N-methylarginine; alternate. Residues Arg-255 and Arg-258 each carry the omega-N-methylarginine modification. At Lys-271 the chain carries N6-acetyllysine. Arg-275 carries the dimethylated arginine; alternate modification. Arg-275 is modified (omega-N-methylarginine; alternate). The residue at position 275 (Arg-275) is an Asymmetric dimethylarginine; alternate.

As to quaternary structure, identified in a IGF2BP1-dependent mRNP granule complex containing untranslated mRNAs. Interacts with APOBEC1. As to expression, ubiquitous.

Its subcellular location is the nucleus. The protein resides in the cytoplasm. Functionally, transcriptional repressor. Binds to CArG box motifs, single-stranded and double-stranded DNA, and RNA. It may be that repression by CBF-A is a result of competitive binding of CBF, a putative positive factor, and CBF-A to the same or overlapping motifs around the CArG boxes. In Mus musculus (Mouse), this protein is Heterogeneous nuclear ribonucleoprotein A/B (Hnrnpab).